The following is a 263-amino-acid chain: MSTSIKAIKESLEAVTSLLDPLFQELATDTRSGVQKALKSRQKAIQAELAEEERLEAMLSYEKALYKKGYQAIAGIDEVGRGPLAGPVVAACVILPKYCKIKGLNDSKKIPKSKHETIYQAVKEKALAIGIGIIDNQLIDEVNIYEATKLAMLEAIKQLESQLTQPDYLLIDAMTLDIAISQQSILKGDANSLSIAAASIVAKVTRDQMMANYDRIFPGYGFAKNAGYGTKEHLQGLKAYGITPIHRKSFEPVKSMCCDSTNP.

Residues 71–262 form the RNase H type-2 domain; that stretch reads QAIAGIDEVG…VKSMCCDSTN (192 aa). 3 residues coordinate a divalent metal cation: aspartate 77, glutamate 78, and aspartate 172.

The protein belongs to the RNase HII family. Mn(2+) is required as a cofactor. Mg(2+) serves as cofactor.

It localises to the cytoplasm. It catalyses the reaction Endonucleolytic cleavage to 5'-phosphomonoester.. Its function is as follows. Endonuclease that specifically degrades the RNA of RNA-DNA hybrids. The protein is Ribonuclease HII of Streptococcus pyogenes serotype M12 (strain MGAS2096).